The sequence spans 61 residues: Metallothionein-2 (61 aa).

Met-1 carries the N-acetylmethionine modification. A beta region spans residues 1-29; sequence MDPNCSCATDGSCSCAGSCKCKQCKCTSC. A divalent metal cation-binding residues include Cys-5, Cys-7, Cys-13, Cys-15, Cys-19, Cys-21, Cys-24, Cys-26, Cys-29, Cys-33, Cys-34, Cys-36, Cys-37, Cys-41, Cys-44, Cys-48, Cys-50, and Cys-57. The interval 30-61 is alpha; the sequence is KKSCCSCCPVGCAKCSQGCICKEASDKCSCCA. Residue Ser-58 is modified to Phosphoserine. A divalent metal cation-binding residues include Cys-59 and Cys-60.

Belongs to the metallothionein superfamily. Type 1 family.

Functionally, metallothioneins have a high content of cysteine residues that bind various heavy metals; these proteins are transcriptionally regulated by both heavy metals and glucocorticoids. The polypeptide is Metallothionein-2 (Mt2) (Rattus norvegicus (Rat)).